The chain runs to 185 residues: Ribose 1,5-bisphosphate phosphokinase PhnN (185 aa).

ATP is bound at residue 10 to 17 (GPSGSGKD).

Belongs to the ribose 1,5-bisphosphokinase family.

It catalyses the reaction alpha-D-ribose 1,5-bisphosphate + ATP = 5-phospho-alpha-D-ribose 1-diphosphate + ADP. Its pathway is metabolic intermediate biosynthesis; 5-phospho-alpha-D-ribose 1-diphosphate biosynthesis; 5-phospho-alpha-D-ribose 1-diphosphate from D-ribose 5-phosphate (route II): step 3/3. Functionally, catalyzes the phosphorylation of ribose 1,5-bisphosphate to 5-phospho-D-ribosyl alpha-1-diphosphate (PRPP). The sequence is that of Ribose 1,5-bisphosphate phosphokinase PhnN from Pseudomonas paraeruginosa (strain DSM 24068 / PA7) (Pseudomonas aeruginosa (strain PA7)).